The following is a 328-amino-acid chain: Reticulocalbin-3 (328 aa).

Residues 1-20 form the signal peptide; the sequence is MMWRPSVLLLLLLLRHGAQG. The segment at 19 to 49 is disordered; it reads QGKPSPDAGPHGQGRVHQAAPLSDAPHDDAH. EF-hand domains lie at 75-112, 113-148, 163-198, 200-235, 241-276, and 277-312; these read ESQARLGRIVDRMDRAGDGDGWVSLAELRAWIAHTQQR, HIRDSVSAAWDTYDTDRDGRVGWEELRNATYGHYAP, KMLARDERRFRVADQDGDSMATREELTAFLHPEEFP, MRDIVIAETLEDLDRNKDGYVQVEEYIADLYSAEPG, WVQTERQQFRDFRDLNKDGHLDGSEVGHWVLPPAQD, and QPLVEANHLLHESDTDKDGRLSKAEILGNWNMFVGS. The Ca(2+) site is built by Asp-92, Asp-94, Trp-96, Glu-101, Asp-126, Asp-128, Asp-130, Arg-132, and Glu-137. Asn-140 carries an N-linked (GlcNAc...) asparagine glycan. Residues Asp-176, Asp-178, Asp-180, Met-182, Glu-187, Asp-213, Asn-215, Asp-217, Tyr-219, Glu-224, Asp-254, Asn-256, Asp-258, His-260, Glu-265, Asp-290, Asp-292, Asp-294, Arg-296, and Glu-301 each contribute to the Ca(2+) site. Positions 325-328 match the Prevents secretion from ER motif; that stretch reads HDEL.

This sequence belongs to the CREC family. In terms of assembly, interacts with PCSK6 (immature form including the propeptide); probably involved in the maturation and the secretion of PCSK6. Post-translationally, degraded by PCSK6 and other endoproteases including FURIN and PCSK5. N-glycosylated. Widely expressed.

It localises to the endoplasmic reticulum lumen. Its function is as follows. Probable molecular chaperone assisting protein biosynthesis and transport in the endoplasmic reticulum. Required for the proper biosynthesis and transport of pulmonary surfactant-associated protein A/SP-A, pulmonary surfactant-associated protein D/SP-D and the lipid transporter ABCA3. By regulating both the proper expression and the degradation through the endoplasmic reticulum-associated protein degradation pathway of these proteins plays a crucial role in pulmonary surfactant homeostasis. Has an anti-fibrotic activity by negatively regulating the secretion of type I and type III collagens. This calcium-binding protein also transiently associates with immature PCSK6 and regulates its secretion. This chain is Reticulocalbin-3, found in Homo sapiens (Human).